The following is a 660-amino-acid chain: Rhamnogalacturonate lyase B (660 aa).

The N-terminal stretch at 1–18 is a signal peptide; it reads MRLGVCFSLAAAASVARA. N-linked (GlcNAc...) asparagine glycans are attached at residues N25, N109, N142, and N284. Residues 446-466 form a disordered region; sequence RLGTPDKSSGEFRHGAARDPT. Over residues 453–466 the composition is skewed to basic and acidic residues; that stretch reads SSGEFRHGAARDPT. N-linked (GlcNAc...) asparagine glycans are attached at residues N524, N566, and N635.

It belongs to the polysaccharide lyase 4 family.

The protein localises to the secreted. The enzyme catalyses Endotype eliminative cleavage of L-alpha-rhamnopyranosyl-(1-&gt;4)-alpha-D-galactopyranosyluronic acid bonds of rhamnogalacturonan I domains in ramified hairy regions of pectin leaving L-rhamnopyranose at the reducing end and 4-deoxy-4,5-unsaturated D-galactopyranosyluronic acid at the non-reducing end.. Functionally, pectinolytic enzymes consist of four classes of enzymes: pectin lyase, polygalacturonase, pectin methylesterase and rhamnogalacturonase. Degrades the rhamnogalacturonan I (RG-I) backbone of pectin. Active against linseed rhamnogalacturonan. This is Rhamnogalacturonate lyase B (rglB) from Emericella nidulans (strain FGSC A4 / ATCC 38163 / CBS 112.46 / NRRL 194 / M139) (Aspergillus nidulans).